Here is a 153-residue protein sequence, read N- to C-terminus: MKDKHSDLVSNRRATHDYEILETFETGIVLQGTEIKSIRDHGATLQDAYVKVIHNELWLIGCNIAHYRFGNIHNHEEKRDRKLLMHKREIKKCKGAIQEKGLALIPLALYLKQGRIKVRIAIAKGKKSFDKRADLKERDDKRQMQQALKQQQY.

The segment covering 133 to 143 (ADLKERDDKRQ) has biased composition (basic and acidic residues). The segment at 133–153 (ADLKERDDKRQMQQALKQQQY) is disordered. Positions 144–153 (MQQALKQQQY) are enriched in low complexity.

The protein belongs to the SmpB family.

Its subcellular location is the cytoplasm. Its function is as follows. Required for rescue of stalled ribosomes mediated by trans-translation. Binds to transfer-messenger RNA (tmRNA), required for stable association of tmRNA with ribosomes. tmRNA and SmpB together mimic tRNA shape, replacing the anticodon stem-loop with SmpB. tmRNA is encoded by the ssrA gene; the 2 termini fold to resemble tRNA(Ala) and it encodes a 'tag peptide', a short internal open reading frame. During trans-translation Ala-aminoacylated tmRNA acts like a tRNA, entering the A-site of stalled ribosomes, displacing the stalled mRNA. The ribosome then switches to translate the ORF on the tmRNA; the nascent peptide is terminated with the 'tag peptide' encoded by the tmRNA and targeted for degradation. The ribosome is freed to recommence translation, which seems to be the essential function of trans-translation. This is SsrA-binding protein from Protochlamydia amoebophila (strain UWE25).